A 377-amino-acid polypeptide reads, in one-letter code: RCC1 domain-containing protein 1 (377 aa).

An interaction with KDM8 region spans residues 1-172 (MAEKRHGAWF…VRQLELGAEH (172 aa)). An RCC1 1 repeat occupies 6 to 57 (HGAWFGFGFCGFGQALGSGNSHHSVYSPEPLHASDDICQVSAGWSYTALVTR). R144 carries the post-translational modification (3R)-3-hydroxyarginine. 3 RCC1 repeats span residues 179–230 (AGQV…CLSE), 232–289 (GDIY…IAIQ), and 319–372 (TGEL…VYAM).

In terms of assembly, found in a complex with KDM8. Interacts (via N-terminus) with KDM8 (via N-terminus). Post-translationally, specifically hydroxylated (with R stereochemistry) at C-3 of ARG-141 by KDM8.

Its subcellular location is the chromosome. In terms of biological role, plays a role in transcriptional repression of satellite repeats, possibly by regulating H3K36 methylation levels in centromeric regions together with KDM8. Possibly together with KDM8, is involved in proper mitotic spindle organization and chromosome segregation. Plays a role in regulating alpha-tubulin deacetylation and cytoskeletal microtubule stability, thereby promoting cell migration and TGF-beta-induced epithelial to mesenchymal transition (EMT), potentially through the inhibition of KDM8. This is RCC1 domain-containing protein 1 (Rccd1) from Mus musculus (Mouse).